Here is a 71-residue protein sequence, read N- to C-terminus: Sec-independent protein translocase protein TatA (71 aa).

The helical transmembrane segment at 1 to 21 (MGSFSLLHWLVVLVIVLLVFG) threads the bilayer. Residues 43–71 (LREDDKPTDQLGSTSQSTASGPQQDHGKH) form a disordered region. Positions 52-65 (QLGSTSQSTASGPQ) are enriched in polar residues.

This sequence belongs to the TatA/E family. As to quaternary structure, the Tat system comprises two distinct complexes: a TatABC complex, containing multiple copies of TatA, TatB and TatC subunits, and a separate TatA complex, containing only TatA subunits. Substrates initially bind to the TatABC complex, which probably triggers association of the separate TatA complex to form the active translocon.

It is found in the cell inner membrane. Its function is as follows. Part of the twin-arginine translocation (Tat) system that transports large folded proteins containing a characteristic twin-arginine motif in their signal peptide across membranes. TatA could form the protein-conducting channel of the Tat system. In Xylella fastidiosa (strain 9a5c), this protein is Sec-independent protein translocase protein TatA.